Reading from the N-terminus, the 351-residue chain is Thiamine-phosphate synthase (351 aa).

The tract at residues 1–128 (MLNSNTKDHE…SKIASEIRYE (128 aa)) is unknown. A thiamine-phosphate synthase region spans residues 129–351 (IYTVEIDLLS…MILKELSHEN (223 aa)). Residues 180–184 (QHRFK) and Asn-212 each bind 4-amino-2-methyl-5-(diphosphooxymethyl)pyrimidine. Residues Asp-213 and Asp-232 each contribute to the Mg(2+) site. Position 251 (Ser-251) interacts with 4-amino-2-methyl-5-(diphosphooxymethyl)pyrimidine. Residue 277–279 (TTT) participates in 2-[(2R,5Z)-2-carboxy-4-methylthiazol-5(2H)-ylidene]ethyl phosphate binding. Lys-280 contacts 4-amino-2-methyl-5-(diphosphooxymethyl)pyrimidine. Residue Gly-307 participates in 2-[(2R,5Z)-2-carboxy-4-methylthiazol-5(2H)-ylidene]ethyl phosphate binding.

Belongs to the thiamine-phosphate synthase family. Mg(2+) is required as a cofactor.

It carries out the reaction 2-[(2R,5Z)-2-carboxy-4-methylthiazol-5(2H)-ylidene]ethyl phosphate + 4-amino-2-methyl-5-(diphosphooxymethyl)pyrimidine + 2 H(+) = thiamine phosphate + CO2 + diphosphate. It catalyses the reaction 2-(2-carboxy-4-methylthiazol-5-yl)ethyl phosphate + 4-amino-2-methyl-5-(diphosphooxymethyl)pyrimidine + 2 H(+) = thiamine phosphate + CO2 + diphosphate. The enzyme catalyses 4-methyl-5-(2-phosphooxyethyl)-thiazole + 4-amino-2-methyl-5-(diphosphooxymethyl)pyrimidine + H(+) = thiamine phosphate + diphosphate. It functions in the pathway cofactor biosynthesis; thiamine diphosphate biosynthesis; thiamine phosphate from 4-amino-2-methyl-5-diphosphomethylpyrimidine and 4-methyl-5-(2-phosphoethyl)-thiazole: step 1/1. Its function is as follows. Condenses 4-methyl-5-(beta-hydroxyethyl)thiazole monophosphate (THZ-P) and 2-methyl-4-amino-5-hydroxymethyl pyrimidine pyrophosphate (HMP-PP) to form thiamine monophosphate (TMP). This chain is Thiamine-phosphate synthase, found in Prochlorococcus marinus (strain AS9601).